The sequence spans 64 residues: Putative antitoxin VapB4 (64 aa).

This sequence belongs to the UPF0165 family.

Possibly the antitoxin component of a type II toxin-antitoxin (TA) system. Its cognate toxin is VapC4 (Potential). The chain is Putative antitoxin VapB4 (vapB4) from Archaeoglobus fulgidus (strain ATCC 49558 / DSM 4304 / JCM 9628 / NBRC 100126 / VC-16).